The primary structure comprises 332 residues: UDP-3-O-acylglucosamine N-acyltransferase (332 aa).

H231 functions as the Proton acceptor in the catalytic mechanism.

It belongs to the transferase hexapeptide repeat family. LpxD subfamily. As to quaternary structure, homotrimer.

It catalyses the reaction a UDP-3-O-[(3R)-3-hydroxyacyl]-alpha-D-glucosamine + a (3R)-hydroxyacyl-[ACP] = a UDP-2-N,3-O-bis[(3R)-3-hydroxyacyl]-alpha-D-glucosamine + holo-[ACP] + H(+). It functions in the pathway bacterial outer membrane biogenesis; LPS lipid A biosynthesis. Its function is as follows. Catalyzes the N-acylation of UDP-3-O-acylglucosamine using 3-hydroxyacyl-ACP as the acyl donor. Is involved in the biosynthesis of lipid A, a phosphorylated glycolipid that anchors the lipopolysaccharide to the outer membrane of the cell. The sequence is that of UDP-3-O-acylglucosamine N-acyltransferase from Vesicomyosocius okutanii subsp. Calyptogena okutanii (strain HA).